A 342-amino-acid chain; its full sequence is MRVDLFDFELPTESIALRPAVPRESARLLQVTSQEMDDYHVADLPNLLQEGDLLIFNDTRVIPAYLEGKKNQARISANMIKREGLRQWQAFVRNAKRLKSDDIVDFGQDVSARVVHRNDDGSVLFEFLGNEPVEILLERAGNMPLPPYIAHKRPADQQDRQDYQTIFAEKEGAVAAPTASLHFTEELLQRLEEKGVKHTKVTLHVGAGTFLPMKVEDSDDHVMHSEWGQISAETANAINETKKQGGRVIATGTTSLRLIESAADETGLVHPFSDETDIFITPGYRFRVIDGLMTNFHLPKSTLFMLVSALMGREKMLAAYQHAIDTGYRFYSYGDSSLLLPK.

It belongs to the QueA family. Monomer.

Its subcellular location is the cytoplasm. It carries out the reaction 7-aminomethyl-7-carbaguanosine(34) in tRNA + S-adenosyl-L-methionine = epoxyqueuosine(34) in tRNA + adenine + L-methionine + 2 H(+). It participates in tRNA modification; tRNA-queuosine biosynthesis. Its function is as follows. Transfers and isomerizes the ribose moiety from AdoMet to the 7-aminomethyl group of 7-deazaguanine (preQ1-tRNA) to give epoxyqueuosine (oQ-tRNA). This is S-adenosylmethionine:tRNA ribosyltransferase-isomerase from Zymomonas mobilis subsp. mobilis (strain ATCC 31821 / ZM4 / CP4).